Here is a 286-residue protein sequence, read N- to C-terminus: Nucleotide-binding protein HCH_05324 (286 aa).

Position 8-15 (8-15 (GRSGSGKS)) interacts with ATP. Position 60–63 (60–63 (DARN)) interacts with GTP.

This sequence belongs to the RapZ-like family.

Functionally, displays ATPase and GTPase activities. The protein is Nucleotide-binding protein HCH_05324 of Hahella chejuensis (strain KCTC 2396).